Reading from the N-terminus, the 479-residue chain is Altronate oxidoreductase (479 aa).

18–29 (IIQFGEGNFLRA) is a binding site for NAD(+).

The protein belongs to the mannitol dehydrogenase family. UxaB subfamily.

The catalysed reaction is D-altronate + NAD(+) = keto-D-tagaturonate + NADH + H(+). It participates in carbohydrate metabolism; pentose and glucuronate interconversion. This chain is Altronate oxidoreductase, found in Bacteroides thetaiotaomicron (strain ATCC 29148 / DSM 2079 / JCM 5827 / CCUG 10774 / NCTC 10582 / VPI-5482 / E50).